Reading from the N-terminus, the 212-residue chain is Proteasome subunit beta (212 aa).

Positions 1–11 (MSQEHQDVKTG) are cleaved as a propeptide — removed in mature form; by autocatalysis. T12 functions as the Nucleophile in the catalytic mechanism.

Belongs to the peptidase T1B family. As to quaternary structure, the 20S proteasome core is composed of 14 alpha and 14 beta subunits that assemble into four stacked heptameric rings, resulting in a barrel-shaped structure. The two inner rings, each composed of seven catalytic beta subunits, are sandwiched by two outer rings, each composed of seven alpha subunits. The catalytic chamber with the active sites is on the inside of the barrel. Has a gated structure, the ends of the cylinder being occluded by the N-termini of the alpha-subunits. Is capped at one or both ends by the proteasome regulatory ATPase, PAN.

It localises to the cytoplasm. The catalysed reaction is Cleavage of peptide bonds with very broad specificity.. The formation of the proteasomal ATPase PAN-20S proteasome complex, via the docking of the C-termini of PAN into the intersubunit pockets in the alpha-rings, triggers opening of the gate for substrate entry. Interconversion between the open-gate and close-gate conformations leads to a dynamic regulation of the 20S proteasome proteolysis activity. In terms of biological role, component of the proteasome core, a large protease complex with broad specificity involved in protein degradation. The chain is Proteasome subunit beta from Methanocorpusculum labreanum (strain ATCC 43576 / DSM 4855 / Z).